The chain runs to 447 residues: METKQILETIQMISEEKLDIRTITMGISLFDCIDSDGVKARQKIYDKLTTSAKDLVKVADRIESEYGIPIVNKRISVTPISMIAAACHDDNYVAYAQTMEKAAETLGVDLIGGFSALVQKGYQSGDRKLIASMPEALSETQRVCGSVNVGSTRAGINMDAVKQMGQVVKDLSEIDPVSCMSLVIFSNAVEDNPFMAGAFHGVGEADKVINVGISGPGVVKRALEQVKGESIDTVSETIKKTAFKVTRMGQFVGNVAAKALNVPFGIVDLSLAPTPSQGDSVAEILEEIGLESVGAPGTTAALALLNDAVKKGGVMACEHVGGLSGAFIPVSEDSGMIKAVEHGNLNLEKLEAMTAVCSVGLDMVAVPGDTPAETISGMIADEAAIGVINNKTTAVRVIPAKGKQVGEQIDFGGIFGYAPVMPVNTNSPAKFVQRGGRIPAPIHSFKN.

The protein belongs to the UPF0210 family. Homodimer.

The protein is UPF0210 protein lhv_0606 of Lactobacillus helveticus (strain DPC 4571).